The sequence spans 151 residues: Superoxide dismutase [Cu-Zn] (151 aa).

C6 carries S-palmitoyl cysteine lipidation. H45, H47, and H62 together coordinate Cu cation. Residues C56 and C144 are joined by a disulfide bond. Positions 62, 70, 79, and 82 each coordinate Zn(2+). H118 serves as a coordination point for Cu cation.

Belongs to the Cu-Zn superoxide dismutase family. As to quaternary structure, homodimer. Cu cation serves as cofactor. It depends on Zn(2+) as a cofactor.

The protein localises to the cytoplasm. The protein resides in the nucleus. It catalyses the reaction 2 superoxide + 2 H(+) = H2O2 + O2. Its function is as follows. Destroys radicals which are normally produced within the cells and which are toxic to biological systems. The sequence is that of Superoxide dismutase [Cu-Zn] (sod1) from Xenopus tropicalis (Western clawed frog).